The chain runs to 81 residues: Delta-conotoxin PVIA (81 aa).

Residues 1–22 form the signal peptide; sequence MKLTCVMIVAVLFLTAWTFVTA. Positions 23-49 are excised as a propeptide; sequence DDSKNGLENHFWKARDEMKNREASKLD. Intrachain disulfides connect cysteine 54–cysteine 69, cysteine 61–cysteine 73, and cysteine 68–cysteine 78. 4-hydroxyproline occurs at positions 57 and 65. Glycine 80 is modified (glycine amide; in form delta-conotoxin PVIA).

The difference between delta-conotoxin PVIA and [deamido]-delta-conotoxin PVIA lies in the state of amidation of Gly-80. Expressed by the venom duct.

It is found in the secreted. In terms of biological role, delta-conotoxins bind to site 6 of voltage-gated sodium channels (Nav) and inhibit the inactivation process. This toxin shows weak effects on rNav1.2/SCN2A (EC(50)=2.9 uM), rNav1.4/SCN4A (EC(50)=5.2 uM), hNav1.7/SCN9A (EC(50)=1.9 uM) and rNav1.7/SCN9A (EC(50)=6.4 uM). In vivo, this toxin shows different effects. In mice, injection of this toxin causes hyperactivity, rapid running, limb extension, and death. In fish, the peptide elicites spurts of rapid swimming, with twisted motions, quivering fins and the lockjaw extended mouth syndrome. Rigid paralysis and death are observed at higher doses. In mollusks, this peptide is inactive. Injection of this peptide together with the kappa-conotoxin PVIIA causes the sudden tetanus of prey (STOP) syndrome, which is a single, lethal 'fin-pop' in envenomed fish. The polypeptide is Delta-conotoxin PVIA (Conus purpurascens (Purple cone)).